A 504-amino-acid chain; its full sequence is Maturase K (504 aa).

The protein belongs to the intron maturase 2 family. MatK subfamily.

The protein localises to the plastid. It is found in the chloroplast. Usually encoded in the trnK tRNA gene intron. Probably assists in splicing its own and other chloroplast group II introns. The chain is Maturase K from Vigna mungo (Black gram).